Reading from the N-terminus, the 387-residue chain is Beta-carotene 4-ketolase (387 aa).

The disordered stretch occupies residues 1–78 (MPHSIDMEDS…GNPTVDDASQ (78 aa)). Polar residues-rich tracts occupy residues 43–53 (NWQTQYHSSEG) and 65–78 (DATT…DASQ).

The enzyme catalyses echinenone + 2 AH2 + 2 O2 = canthaxanthin + 2 A + 3 H2O. It carries out the reaction all-trans-beta-carotene + 2 AH2 + 2 O2 = echinenone + 2 A + 3 H2O. The protein operates within carotenoid biosynthesis. Involved in the biosynthesis of ketocarotenoids which are powerful anti-oxidative molecules. Catalyzes the conversion of beta-carotene to canthaxanthin via echinenone. This chain is Beta-carotene 4-ketolase, found in Protosiphon botryoides (Green alga).